The chain runs to 419 residues: Cytosine permease (419 aa).

Topologically, residues 1–19 (MSQDNNFSQGPVPQSARKG) are cytoplasmic. Residues 20 to 39 (VLALTFVMLGLTFFSASMWT) traverse the membrane as a helical segment. Topologically, residues 40–51 (GGTLGTGLSYHD) are periplasmic. Residues 52–71 (FFLAVLIGNLLLGIYTSFLG) form a helical membrane-spanning segment. Over 72–100 (YIGAKTGLTTHLLARFSFGVKGSWLPSLL) the chain is Cytoplasmic. Residues 101 to 120 (LGGTQVGWFGVGVAMFAIPV) traverse the membrane as a helical segment. At 121 to 127 (GKATGLD) the chain is on the periplasmic side. A helical membrane pass occupies residues 128–147 (INLLIAVSGLLMTVTVFFGI). Residues 148–152 (SALTV) are Cytoplasmic-facing. A helical transmembrane segment spans residues 153–172 (LSVIAVPAIACLGGYSVWLA). The Periplasmic portion of the chain corresponds to 173–192 (VNGMGGLDALKAVVPAQPLD). The chain crosses the membrane as a helical span at residues 193 to 212 (FNVALALVVGSFISAGTLTA). The Cytoplasmic portion of the chain corresponds to 213–221 (DFVRFGRNA). The chain crosses the membrane as a helical span at residues 222–242 (KLAVLVAMVAFFLGNSLMFIF). Topologically, residues 243–257 (GAAGAAALGMADISD) are periplasmic. Residues 258–277 (VMIAQGLLLPAIVVLGLNIW) traverse the membrane as a helical segment. The Cytoplasmic segment spans residues 278–300 (TTNDNALYASGLGFANITGMSSK). Residues 301 to 320 (TLSVINGIIGTVCALWLYNN) traverse the membrane as a helical segment. A topological domain (periplasmic) is located at residue Phe-321. The helical transmembrane segment at 322-341 (VGWLTFLSAAIPPVGGVIIA) threads the bilayer. The Cytoplasmic portion of the chain corresponds to 342–358 (DYLMNRRRYEHFATTRM). A helical membrane pass occupies residues 359-378 (MSVNWVAILAVALGIAAGHW). The Periplasmic segment spans residues 379–380 (LP). The chain crosses the membrane as a helical span at residues 381–400 (GIVPVNAVLGGALSYLILNP). Residues 401–419 (ILNRKTTAAMTHVEANSVE) lie on the Cytoplasmic side of the membrane.

It belongs to the purine-cytosine permease (2.A.39) family.

The protein resides in the cell inner membrane. Functionally, required for cytosine transport into the cell. This chain is Cytosine permease (codB), found in Escherichia coli O6:H1 (strain CFT073 / ATCC 700928 / UPEC).